Consider the following 841-residue polypeptide: Formin-like protein 10 (841 aa).

The first 25 residues, 1-25 (MDGLCYVIFIIFSLLSCAFSPLSYA), serve as a signal peptide directing secretion. The chain crosses the membrane as a helical span at residues 102-122 (LIPAISAVLAAATLIALAFFF). Disordered stretches follow at residues 137-166 (SKSL…QNKL), 254-297 (ISSH…RTVR), and 403-512 (KSSW…SKQR). The segment covering 139–152 (SLASDISQSQQQTL) has biased composition (polar residues). Positions 254–278 (ISSHSDSPAMSPSAAMSPPMNSTAP) are enriched in low complexity. Over residues 279-293 (HWSTNQNTHSPSSPE) the composition is skewed to polar residues. Residues 426-444 (LPPPQRPPPAMPEPPPLVP) show a composition bias toward pro residues. The 373-residue stretch at 469–841 (EGTTDRPKPK…KKMEVTSSLA (373 aa)) folds into the FH2 domain. Polar residues predominate over residues 502–512 (YNSSNANSKQR).

It belongs to the formin-like family. Class-I subfamily.

The protein localises to the membrane. Might be involved in the organization and polarity of the actin cytoskeleton. This Arabidopsis thaliana (Mouse-ear cress) protein is Formin-like protein 10 (FH10).